Here is a 357-residue protein sequence, read N- to C-terminus: Membrane-bound lytic murein transglycosylase C (357 aa).

The N-terminal stretch at 1–16 (MKKILPLVIIAPLLIS) is a signal peptide. Residue Cys17 is the site of N-palmitoyl cysteine attachment. A lipid anchor (S-diacylglycerol cysteine) is attached at Cys17.

This sequence belongs to the transglycosylase Slt family.

It localises to the cell outer membrane. The catalysed reaction is Exolytic cleavage of the (1-&gt;4)-beta-glycosidic linkage between N-acetylmuramic acid (MurNAc) and N-acetylglucosamine (GlcNAc) residues in peptidoglycan, from either the reducing or the non-reducing ends of the peptidoglycan chains, with concomitant formation of a 1,6-anhydrobond in the MurNAc residue.. Functionally, murein-degrading enzyme. May play a role in recycling of muropeptides during cell elongation and/or cell division. This is Membrane-bound lytic murein transglycosylase C from Sodalis glossinidius (strain morsitans).